The sequence spans 153 residues: Ribosome maturation factor RimP (153 aa).

This sequence belongs to the RimP family.

It localises to the cytoplasm. Functionally, required for maturation of 30S ribosomal subunits. This is Ribosome maturation factor RimP from Clostridium botulinum (strain 657 / Type Ba4).